Reading from the N-terminus, the 430-residue chain is Elongation factor Tu (430 aa).

The tr-type G domain maps to 13–220 (RPHLNIGTIG…ACDKYIALPE (208 aa)). The G1 stretch occupies residues 22–29 (GHVDHGKT). 22–29 (GHVDHGKT) contributes to the GTP binding site. Threonine 29 serves as a coordination point for Mg(2+). The G2 stretch occupies residues 66-70 (GITIS). Residues 87 to 90 (DCPG) are G3. GTP is bound by residues 87–91 (DCPGH) and 142–145 (NKCD). The segment at 142–145 (NKCD) is G4. The interval 188-190 (SAL) is G5.

It belongs to the TRAFAC class translation factor GTPase superfamily. Classic translation factor GTPase family. EF-Tu/EF-1A subfamily. Monomer.

It localises to the cytoplasm. It carries out the reaction GTP + H2O = GDP + phosphate + H(+). In terms of biological role, GTP hydrolase that promotes the GTP-dependent binding of aminoacyl-tRNA to the A-site of ribosomes during protein biosynthesis. This Neorickettsia sennetsu (strain ATCC VR-367 / Miyayama) (Ehrlichia sennetsu) protein is Elongation factor Tu.